Reading from the N-terminus, the 139-residue chain is Large ribosomal subunit protein uL16 (139 aa).

Basic residues predominate over residues 1-19; that stretch reads MLIPRKVKHRKQHHPKRSG. Positions 1–22 are disordered; that stretch reads MLIPRKVKHRKQHHPKRSGVAK.

The protein belongs to the universal ribosomal protein uL16 family. Part of the 50S ribosomal subunit.

Functionally, binds 23S rRNA and is also seen to make contacts with the A and possibly P site tRNAs. The protein is Large ribosomal subunit protein uL16 of Acidothermus cellulolyticus (strain ATCC 43068 / DSM 8971 / 11B).